The chain runs to 262 residues: Thiazole synthase (262 aa).

K96 acts as the Schiff-base intermediate with DXP in catalysis. Residues G157, 184–185 (AG), and 206–207 (NT) contribute to the 1-deoxy-D-xylulose 5-phosphate site.

This sequence belongs to the ThiG family. As to quaternary structure, homotetramer. Forms heterodimers with either ThiH or ThiS.

It localises to the cytoplasm. The catalysed reaction is [ThiS sulfur-carrier protein]-C-terminal-Gly-aminoethanethioate + 2-iminoacetate + 1-deoxy-D-xylulose 5-phosphate = [ThiS sulfur-carrier protein]-C-terminal Gly-Gly + 2-[(2R,5Z)-2-carboxy-4-methylthiazol-5(2H)-ylidene]ethyl phosphate + 2 H2O + H(+). The protein operates within cofactor biosynthesis; thiamine diphosphate biosynthesis. Functionally, catalyzes the rearrangement of 1-deoxy-D-xylulose 5-phosphate (DXP) to produce the thiazole phosphate moiety of thiamine. Sulfur is provided by the thiocarboxylate moiety of the carrier protein ThiS. In vitro, sulfur can be provided by H(2)S. This is Thiazole synthase from Legionella pneumophila (strain Lens).